Reading from the N-terminus, the 274-residue chain is Acyl-[acyl-carrier-protein]--UDP-N-acetylglucosamine O-acyltransferase (274 aa).

This sequence belongs to the transferase hexapeptide repeat family. LpxA subfamily. As to quaternary structure, homotrimer.

It is found in the cytoplasm. The catalysed reaction is a (3R)-hydroxyacyl-[ACP] + UDP-N-acetyl-alpha-D-glucosamine = a UDP-3-O-[(3R)-3-hydroxyacyl]-N-acetyl-alpha-D-glucosamine + holo-[ACP]. The protein operates within glycolipid biosynthesis; lipid IV(A) biosynthesis; lipid IV(A) from (3R)-3-hydroxytetradecanoyl-[acyl-carrier-protein] and UDP-N-acetyl-alpha-D-glucosamine: step 1/6. In terms of biological role, involved in the biosynthesis of lipid A, a phosphorylated glycolipid that anchors the lipopolysaccharide to the outer membrane of the cell. In Bartonella henselae (strain ATCC 49882 / DSM 28221 / CCUG 30454 / Houston 1) (Rochalimaea henselae), this protein is Acyl-[acyl-carrier-protein]--UDP-N-acetylglucosamine O-acyltransferase.